Consider the following 326-residue polypeptide: 3-oxopimeloyl-[acyl-carrier-protein] synthase (326 aa).

Residues C115 and H253 contribute to the active site. The tract at residues Q254–R258 is ACP-binding. The active site involves N283.

This sequence belongs to the thiolase-like superfamily. BioZ family.

The catalysed reaction is malonyl-[ACP] + an acyl-CoA + H(+) = a 3-oxoacyl-[ACP] + CO2 + CoA. The enzyme catalyses glutaryl-CoA + malonyl-[ACP] + H(+) = 3-oxo-6-carboxyhexanoyl-[ACP] + CO2 + CoA. Its pathway is cofactor biosynthesis; biotin biosynthesis. Its function is as follows. Involved in the formation of the biotin precursor pimeloyl-ACP. Catalyzes the condensation of glutaryl-CoA, an intermediate in lysine degradation, with malonyl-ACP to produce 3-oxopimeloyl-ACP. The protein is 3-oxopimeloyl-[acyl-carrier-protein] synthase of Brucella abortus (strain 2308).